Consider the following 48-residue polypeptide: Mating-type pheromone BAP1(2) (48 aa).

Cysteine methyl ester is present on C45. C45 carries S-farnesyl cysteine lipidation. A propeptide spans 46–48 (VRG) (removed in mature form).

It localises to the cell membrane. In terms of biological role, activates B-regulated development. The protein is Mating-type pheromone BAP1(2) (BAP1(2)) of Schizophyllum commune (Split gill fungus).